We begin with the raw amino-acid sequence, 127 residues long: MNGFLLVALGGAIGASLRHGVGLVAVRHLPLGWPWGTSFVNIAGSLAMGLLAGWLALKAEGASQEARLFLATGVLGGFTTFSAFSLEVATMLRSGETLKAGLYAGVSVLLGVSALFIGLWMARRIFA.

Helical transmembrane passes span 37–57 (TSFVNIAGSLAMGLLAGWLAL), 68–88 (LFLATGVLGGFTTFSAFSLEV), and 102–122 (LYAGVSVLLGVSALFIGLWMA). Positions 76 and 79 each coordinate Na(+).

The protein belongs to the fluoride channel Fluc/FEX (TC 1.A.43) family.

It localises to the cell inner membrane. The enzyme catalyses fluoride(in) = fluoride(out). Its activity is regulated as follows. Na(+) is not transported, but it plays an essential structural role and its presence is essential for fluoride channel function. In terms of biological role, fluoride-specific ion channel. Important for reducing fluoride concentration in the cell, thus reducing its toxicity. This chain is Fluoride-specific ion channel FluC, found in Hyphomonas neptunium (strain ATCC 15444).